A 210-amino-acid chain; its full sequence is Ribosomal RNA large subunit methyltransferase E (210 aa).

Residues Gly61, Trp63, Asp81, Asp97, and Asp122 each contribute to the S-adenosyl-L-methionine site. Catalysis depends on Lys162, which acts as the Proton acceptor.

Belongs to the class I-like SAM-binding methyltransferase superfamily. RNA methyltransferase RlmE family.

Its subcellular location is the cytoplasm. It carries out the reaction uridine(2552) in 23S rRNA + S-adenosyl-L-methionine = 2'-O-methyluridine(2552) in 23S rRNA + S-adenosyl-L-homocysteine + H(+). In terms of biological role, specifically methylates the uridine in position 2552 of 23S rRNA at the 2'-O position of the ribose in the fully assembled 50S ribosomal subunit. This chain is Ribosomal RNA large subunit methyltransferase E, found in Xanthomonas oryzae pv. oryzae (strain MAFF 311018).